Reading from the N-terminus, the 492-residue chain is Protein nucleotidyltransferase YdiU (492 aa).

ATP is bound by residues Gly-95, Gly-97, Arg-98, Lys-118, Asp-130, Gly-131, Arg-181, and Arg-188. Asp-257 serves as the catalytic Proton acceptor. 2 residues coordinate Mg(2+): Asn-258 and Asp-267. An ATP-binding site is contributed by Asp-267. Positions 466 to 475 (YDDQPEHAEY) are enriched in basic and acidic residues. Residues 466–492 (YDDQPEHAEYRQPPPPSEKPYQTFCGT) form a disordered region.

This sequence belongs to the SELO family. It depends on Mg(2+) as a cofactor. Mn(2+) is required as a cofactor.

It catalyses the reaction L-seryl-[protein] + ATP = 3-O-(5'-adenylyl)-L-seryl-[protein] + diphosphate. The enzyme catalyses L-threonyl-[protein] + ATP = 3-O-(5'-adenylyl)-L-threonyl-[protein] + diphosphate. The catalysed reaction is L-tyrosyl-[protein] + ATP = O-(5'-adenylyl)-L-tyrosyl-[protein] + diphosphate. It carries out the reaction L-histidyl-[protein] + UTP = N(tele)-(5'-uridylyl)-L-histidyl-[protein] + diphosphate. It catalyses the reaction L-seryl-[protein] + UTP = O-(5'-uridylyl)-L-seryl-[protein] + diphosphate. The enzyme catalyses L-tyrosyl-[protein] + UTP = O-(5'-uridylyl)-L-tyrosyl-[protein] + diphosphate. Its function is as follows. Nucleotidyltransferase involved in the post-translational modification of proteins. It can catalyze the addition of adenosine monophosphate (AMP) or uridine monophosphate (UMP) to a protein, resulting in modifications known as AMPylation and UMPylation. This chain is Protein nucleotidyltransferase YdiU, found in Syntrophotalea carbinolica (strain DSM 2380 / NBRC 103641 / GraBd1) (Pelobacter carbinolicus).